A 117-amino-acid chain; its full sequence is Membrane-anchored ubiquitin-fold protein 1 (117 aa).

In terms of domain architecture, Ubiquitin-like spans 8–74 (LEIKFRLTDG…LENSKTVKDY (67 aa)). Residue cysteine 112 is the site of S-palmitoyl cysteine attachment. Cysteine 114 carries the post-translational modification Cysteine methyl ester. A lipid anchor (S-farnesyl cysteine) is attached at cysteine 114. A propeptide spans 115–117 (SVM) (removed in mature form).

It localises to the cell membrane. Functionally, may serve as docking site to facilitate the association of other proteins to the plasma membrane. This Arabidopsis thaliana (Mouse-ear cress) protein is Membrane-anchored ubiquitin-fold protein 1 (MUB1).